Consider the following 156-residue polypeptide: ATP synthase subunit b (156 aa).

Residues 11–31 (LIAFALFVWFCMKFVWPPIIN) traverse the membrane as a helical segment.

This sequence belongs to the ATPase B chain family. F-type ATPases have 2 components, F(1) - the catalytic core - and F(0) - the membrane proton channel. F(1) has five subunits: alpha(3), beta(3), gamma(1), delta(1), epsilon(1). F(0) has three main subunits: a(1), b(2) and c(10-14). The alpha and beta chains form an alternating ring which encloses part of the gamma chain. F(1) is attached to F(0) by a central stalk formed by the gamma and epsilon chains, while a peripheral stalk is formed by the delta and b chains.

It localises to the cell inner membrane. Functionally, f(1)F(0) ATP synthase produces ATP from ADP in the presence of a proton or sodium gradient. F-type ATPases consist of two structural domains, F(1) containing the extramembraneous catalytic core and F(0) containing the membrane proton channel, linked together by a central stalk and a peripheral stalk. During catalysis, ATP synthesis in the catalytic domain of F(1) is coupled via a rotary mechanism of the central stalk subunits to proton translocation. Component of the F(0) channel, it forms part of the peripheral stalk, linking F(1) to F(0). The chain is ATP synthase subunit b from Haemophilus influenzae (strain PittEE).